The sequence spans 281 residues: Phosphonates import ATP-binding protein PhnC (281 aa).

Positions isoleucine 5 to alanine 253 constitute an ABC transporter domain. Glycine 38–serine 45 is an ATP binding site.

Belongs to the ABC transporter superfamily. Phosphonates importer (TC 3.A.1.9.1) family. The complex is composed of two ATP-binding proteins (PhnC), two transmembrane proteins (PhnE) and a solute-binding protein (PhnD).

Its subcellular location is the cell inner membrane. It catalyses the reaction phosphonate(out) + ATP + H2O = phosphonate(in) + ADP + phosphate + H(+). Part of the ABC transporter complex PhnCDE involved in phosphonates import. Responsible for energy coupling to the transport system. In Cupriavidus pinatubonensis (strain JMP 134 / LMG 1197) (Cupriavidus necator (strain JMP 134)), this protein is Phosphonates import ATP-binding protein PhnC.